Reading from the N-terminus, the 120-residue chain is NAD(P)H-quinone oxidoreductase subunit 3, chloroplastic (120 aa).

3 consecutive transmembrane segments (helical) span residues 10–30 (FWLFLLIASLIPVSAFSISKI), 64–84 (MFALVFVIFDVETVFLYPWAM), and 89–109 (LGISAFIEALIFVLILIIGLI).

This sequence belongs to the complex I subunit 3 family. NDH is composed of at least 16 different subunits, 5 of which are encoded in the nucleus.

It is found in the plastid. It localises to the chloroplast thylakoid membrane. It carries out the reaction a plastoquinone + NADH + (n+1) H(+)(in) = a plastoquinol + NAD(+) + n H(+)(out). It catalyses the reaction a plastoquinone + NADPH + (n+1) H(+)(in) = a plastoquinol + NADP(+) + n H(+)(out). In terms of biological role, NDH shuttles electrons from NAD(P)H:plastoquinone, via FMN and iron-sulfur (Fe-S) centers, to quinones in the photosynthetic chain and possibly in a chloroplast respiratory chain. The immediate electron acceptor for the enzyme in this species is believed to be plastoquinone. Couples the redox reaction to proton translocation, and thus conserves the redox energy in a proton gradient. The protein is NAD(P)H-quinone oxidoreductase subunit 3, chloroplastic of Angiopteris evecta (Mule's foot fern).